A 76-amino-acid chain; its full sequence is Large ribosomal subunit protein bL31 (76 aa).

Zn(2+)-binding residues include C16, C18, C37, and C40.

This sequence belongs to the bacterial ribosomal protein bL31 family. Type A subfamily. Part of the 50S ribosomal subunit. Zn(2+) serves as cofactor.

Its function is as follows. Binds the 23S rRNA. The sequence is that of Large ribosomal subunit protein bL31 from Maridesulfovibrio salexigens (strain ATCC 14822 / DSM 2638 / NCIMB 8403 / VKM B-1763) (Desulfovibrio salexigens).